The chain runs to 162 residues: 2-C-methyl-D-erythritol 2,4-cyclodiphosphate synthase (162 aa).

A divalent metal cation is bound by residues aspartate 9 and histidine 11. Residues 9 to 11 (DVH) and 37 to 38 (HS) contribute to the 4-CDP-2-C-methyl-D-erythritol 2-phosphate site. A divalent metal cation is bound at residue histidine 45.

The protein belongs to the IspF family. Homotrimer. A divalent metal cation serves as cofactor.

It carries out the reaction 4-CDP-2-C-methyl-D-erythritol 2-phosphate = 2-C-methyl-D-erythritol 2,4-cyclic diphosphate + CMP. It participates in isoprenoid biosynthesis; isopentenyl diphosphate biosynthesis via DXP pathway; isopentenyl diphosphate from 1-deoxy-D-xylulose 5-phosphate: step 4/6. Involved in the biosynthesis of isopentenyl diphosphate (IPP) and dimethylallyl diphosphate (DMAPP), two major building blocks of isoprenoid compounds. Catalyzes the conversion of 4-diphosphocytidyl-2-C-methyl-D-erythritol 2-phosphate (CDP-ME2P) to 2-C-methyl-D-erythritol 2,4-cyclodiphosphate (ME-CPP) with a corresponding release of cytidine 5-monophosphate (CMP). This is 2-C-methyl-D-erythritol 2,4-cyclodiphosphate synthase from Petrotoga mobilis (strain DSM 10674 / SJ95).